The following is a 241-amino-acid chain: Ribosomal RNA small subunit methyltransferase J (241 aa).

Residues 94–95 (RD) and aspartate 163 contribute to the S-adenosyl-L-methionine site.

Belongs to the methyltransferase superfamily. RsmJ family.

It localises to the cytoplasm. It catalyses the reaction guanosine(1516) in 16S rRNA + S-adenosyl-L-methionine = N(2)-methylguanosine(1516) in 16S rRNA + S-adenosyl-L-homocysteine + H(+). In terms of biological role, specifically methylates the guanosine in position 1516 of 16S rRNA. This chain is Ribosomal RNA small subunit methyltransferase J, found in Francisella tularensis subsp. novicida (strain U112).